A 673-amino-acid polypeptide reads, in one-letter code: Probable potassium transport system protein Kup 1 (673 aa).

13 helical membrane-spanning segments follow: residues 14–34, 58–78, 101–121, 147–167, 175–195, 196–216, 220–240, 252–272, 294–314, 345–365, 374–394, 403–423, and 427–447; these read GAGFIIAMGIVYGDIGTSPLY, LSLIIWTLTLITTVKYVWIAL, WLIIPAMIGGAALLSDGALTP, LPIVIITLAILAILFLIQRFG, FGPVMFIWFSFFGITGLINLF, GDFSVLQAINPYWAIHLLLSP, AGIFVLGSVFLATTGAEALYS, VSWPFVKVCIILSYCGQAAWL, LIIFSVILATLAAIIASQALI, LYIPAVNLGLWLAASFIVVYF, AYGLAITVTMLMTTILLTVYL, VFVVLFFGAFIFIEGLFFAAS, and FLHGGYVVVILAALILFVMAI.

The protein belongs to the HAK/KUP transporter (TC 2.A.72) family.

The protein localises to the cell membrane. The catalysed reaction is K(+)(in) + H(+)(in) = K(+)(out) + H(+)(out). In terms of biological role, transport of potassium into the cell. Likely operates as a K(+):H(+) symporter. In Lactococcus lactis subsp. cremoris (strain SK11), this protein is Probable potassium transport system protein Kup 1.